The chain runs to 141 residues: Antifungal protein ginkbilobin-like protein 1 (141 aa).

Residues 1–32 (MSISSKFQLRSSTSLLLLVALMVVMGMDGAAA) form the signal peptide. One can recognise a Gnk2-homologous domain in the interval 36–141 (TNFVSSACNT…CFIQYEQHSF (106 aa)). 3 cysteine pairs are disulfide-bonded: Cys-43-Cys-119, Cys-95-Cys-104, and Cys-107-Cys-132. Asn-44 is an alpha-D-mannopyranose binding site. Alpha-D-mannopyranose contacts are provided by Arg-126 and Glu-137.

In terms of biological role, exerts antifungal activity through its carbohydrate-binding specificity. The sequence is that of Antifungal protein ginkbilobin-like protein 1 from Picea glauca (White spruce).